The sequence spans 125 residues: uncharacterized protein (125 aa).

Positions 19–73 (IYSLRLAKGLSRQQLAEVIDVTHQQLQKYEKAINRISVGRLVLIAEALDRNIDYF) constitute an HTH cro/C1-type domain. Residues 30–49 (RQQLAEVIDVTHQQLQKYEK) constitute a DNA-binding region (H-T-H motif).

This is an uncharacterized protein from Rickettsia conorii (strain ATCC VR-613 / Malish 7).